The chain runs to 169 residues: S-ribosylhomocysteine lyase (169 aa).

Residues His-54, His-58, and Cys-128 each contribute to the Fe cation site.

This sequence belongs to the LuxS family. As to quaternary structure, homodimer. Fe cation is required as a cofactor.

It carries out the reaction S-(5-deoxy-D-ribos-5-yl)-L-homocysteine = (S)-4,5-dihydroxypentane-2,3-dione + L-homocysteine. In terms of biological role, involved in the synthesis of autoinducer 2 (AI-2) which is secreted by bacteria and is used to communicate both the cell density and the metabolic potential of the environment. The regulation of gene expression in response to changes in cell density is called quorum sensing. Catalyzes the transformation of S-ribosylhomocysteine (RHC) to homocysteine (HC) and 4,5-dihydroxy-2,3-pentadione (DPD). The polypeptide is S-ribosylhomocysteine lyase (Shewanella baltica (strain OS223)).